The following is a 55-amino-acid chain: Large ribosomal subunit protein bL33 (55 aa).

It belongs to the bacterial ribosomal protein bL33 family.

The sequence is that of Large ribosomal subunit protein bL33 from Polaromonas sp. (strain JS666 / ATCC BAA-500).